The sequence spans 910 residues: Myelin regulatory factor-like protein (910 aa).

A DNA-binding region (NDT80) is located at residues 142–405; it reads GCSYPQQPLC…SNPGQFENDS (264 aa). The tract at residues 189–208 is disordered; the sequence is RSRSSEVQDPDSEGQNRMPT. Positions 451 to 559 constitute a Peptidase S74 domain; that stretch reads SDSRAKQNIQ…KLTNNLEERI (109 aa). A coiled-coil region spans residues 543-575; that stretch reads GAVKQLCKLTNNLEERIEELEIWNRKLARLKRL. The helical transmembrane segment at 628–648 threads the bilayer; that stretch reads LVITLIAVMAFCALTIVALYI. The interval 661 to 682 is disordered; it reads LPPSNITSSQEPALLPTASSSA. A compositionally biased stretch (polar residues) spans 663 to 682; the sequence is PSNITSSQEPALLPTASSSA.

It belongs to the MRF family.

The protein resides in the membrane. The polypeptide is Myelin regulatory factor-like protein (MYRFL) (Homo sapiens (Human)).